A 152-amino-acid polypeptide reads, in one-letter code: Mid1-interacting protein 1A (152 aa).

A compositionally biased stretch (basic and acidic residues) spans 87–105 (SEDQRRKKDTSASEPVRTE). The tract at residues 87-109 (SEDQRRKKDTSASEPVRTEEESD) is disordered.

Belongs to the SPOT14 family. Expressed for a short period in the cells that will produce the enveloping layer (EVL).

The protein localises to the nucleus. It localises to the cytoplasm. The protein resides in the cytoskeleton. Functionally, involved in stabilization of microtubules. May play a role in the regulation of lipogenesis. The polypeptide is Mid1-interacting protein 1A (mid1ip1a) (Danio rerio (Zebrafish)).